We begin with the raw amino-acid sequence, 137 residues long: Large ribosomal subunit protein uL16 (137 aa).

This sequence belongs to the universal ribosomal protein uL16 family. In terms of assembly, part of the 50S ribosomal subunit.

Functionally, binds 23S rRNA and is also seen to make contacts with the A and possibly P site tRNAs. The polypeptide is Large ribosomal subunit protein uL16 (Nitrobacter winogradskyi (strain ATCC 25391 / DSM 10237 / CIP 104748 / NCIMB 11846 / Nb-255)).